We begin with the raw amino-acid sequence, 3122 residues long: DNA polymerase zeta catalytic subunit (3122 aa).

Disordered stretches follow at residues 270–289 (QRRR…SQDC), 425–457 (GYQG…NEPQ), 487–509 (LCRN…EMEW), 524–545 (LDGT…RAHS), and 842–886 (TSTK…TFEN). Residues 277 to 286 (ESSQISQPES) show a composition bias toward polar residues. Residues 497–509 (EEDDSSSEEEMEW) are compositionally biased toward acidic residues. Polar residues-rich tracts occupy residues 533–545 (DNPL…RAHS) and 842–860 (TSTK…THND). Ser1029 is modified (phosphoserine). Disordered stretches follow at residues 1034-1075 (YPIY…TLSF), 1154-1285 (VYNT…PTGI), 1429-1453 (VSVS…ESQT), 1538-1616 (KAQS…LSDD), 1842-1869 (NDVL…SFTP), 1959-1979 (NPRP…ESSN), and 2091-2138 (AAVP…RHSS). Phosphothreonine is present on Thr1040. 2 stretches are compositionally biased toward basic residues: residues 1042 to 1063 (KKSH…KQHR) and 1166 to 1179 (KASR…KSKA). The span at 1215–1239 (RANEKSLSRKHAIPADEKMKPHSEA) shows a compositional bias: basic and acidic residues. Over residues 1243-1270 (PNHQSVSELTSSSGAQALSKQKEMSQTG) the composition is skewed to polar residues. The segment covering 1429–1440 (VSVSEQSKTSET) has biased composition (low complexity). 2 stretches are compositionally biased toward polar residues: residues 1441 to 1453 (CSPG…ESQT) and 1538 to 1561 (KAQS…ISVS). Residues 1566 to 1587 (KANKRTRPVTSPRKPRTPRRTK) show a composition bias toward basic residues. Basic and acidic residues predominate over residues 1588-1598 (PKEQTPRRLKV). Residues 1602-1615 (NLQTSGHLDNSLSD) show a composition bias toward polar residues. Residues 1844–1895 (VLTPTPDSSPRSTSSPLQSKNGSFTPRTAHILKPLMSPPSREEIVATLLDHD) are mediates interaction with MAD2L2. Over residues 1846-1859 (TPTPDSSPRSTSSP) the composition is skewed to low complexity. Residues 1860-1869 (LQSKNGSFTP) are compositionally biased toward polar residues. At Ser1964 the chain carries Phosphoserine. Residues Cys3034, Cys3037, Cys3046, and Cys3049 each coordinate Zn(2+). A CysA-type zinc finger spans residues 3034–3049 (CPVCDDLTQHGICSKC). The [4Fe-4S] cluster site is built by Cys3078, Cys3081, Cys3091, and Cys3096. The short motif at 3078 to 3096 (CRNCTGSFDRHIPCVSLNC) is the CysB motif element.

This sequence belongs to the DNA polymerase type-B family. As to quaternary structure, heterodimer with MAD2L2. This dimer forms the minimal DNA polymerase zeta complex (Pol-zeta2), with REV3L bearing DNA polymerase catalytic activity, although its activity is very low in this context. Component of the tetrameric Pol-zeta complex (Pol-zeta4), which consists of REV3L, MAD2L2, POLD2 and POLD3; Pol-zeta4 is the fully active form of DNA polymerase zeta. [4Fe-4S] cluster serves as cofactor.

The protein resides in the nucleus. It catalyses the reaction DNA(n) + a 2'-deoxyribonucleoside 5'-triphosphate = DNA(n+1) + diphosphate. Functionally, catalytic subunit of the DNA polymerase zeta complex, an error-prone polymerase specialized in translesion DNA synthesis (TLS). Lacks an intrinsic 3'-5' exonuclease activity and thus has no proofreading function. The chain is DNA polymerase zeta catalytic subunit (Rev3l) from Mus musculus (Mouse).